The chain runs to 187 residues: DNA-3-methyladenine glycosylase 1 (187 aa).

Zn(2+) is bound by residues cysteine 4, histidine 17, histidine 175, and cysteine 179.

The enzyme catalyses Hydrolysis of alkylated DNA, releasing 3-methyladenine.. With respect to regulation, activity is controlled by product inhibition. Functionally, hydrolysis of the deoxyribose N-glycosidic bond to excise 3-methyladenine from the damaged DNA polymer formed by alkylation lesions. This is DNA-3-methyladenine glycosylase 1 from Escherichia coli (strain K12).